The sequence spans 217 residues: Pyridoxine/pyridoxamine 5'-phosphate oxidase (217 aa).

Substrate contacts are provided by residues 13–16 and K71; that span reads RRDY. FMN contacts are provided by residues 66 to 71, 81 to 82, K88, and Q110; these read RIVLLK and YT. 3 residues coordinate substrate: Y128, R132, and S136. FMN-binding positions include 145 to 146 and W190; that span reads QS. 196–198 is a substrate binding site; sequence RLH. R200 lines the FMN pocket.

This sequence belongs to the pyridoxamine 5'-phosphate oxidase family. As to quaternary structure, homodimer. Requires FMN as cofactor.

The catalysed reaction is pyridoxamine 5'-phosphate + O2 + H2O = pyridoxal 5'-phosphate + H2O2 + NH4(+). The enzyme catalyses pyridoxine 5'-phosphate + O2 = pyridoxal 5'-phosphate + H2O2. It participates in cofactor metabolism; pyridoxal 5'-phosphate salvage; pyridoxal 5'-phosphate from pyridoxamine 5'-phosphate: step 1/1. The protein operates within cofactor metabolism; pyridoxal 5'-phosphate salvage; pyridoxal 5'-phosphate from pyridoxine 5'-phosphate: step 1/1. In terms of biological role, catalyzes the oxidation of either pyridoxine 5'-phosphate (PNP) or pyridoxamine 5'-phosphate (PMP) into pyridoxal 5'-phosphate (PLP). The chain is Pyridoxine/pyridoxamine 5'-phosphate oxidase from Edwardsiella ictaluri (strain 93-146).